A 183-amino-acid polypeptide reads, in one-letter code: Probable adenylyl-sulfate kinase (183 aa).

Residue 17–24 (GLPGSGKT) coordinates ATP. Ser91 (phosphoserine intermediate) is an active-site residue.

The protein belongs to the APS kinase family.

The catalysed reaction is adenosine 5'-phosphosulfate + ATP = 3'-phosphoadenylyl sulfate + ADP + H(+). It functions in the pathway sulfur metabolism; hydrogen sulfide biosynthesis; sulfite from sulfate: step 2/3. Its function is as follows. Catalyzes the synthesis of activated sulfate. The protein is Probable adenylyl-sulfate kinase (cysC) of Aeropyrum pernix (strain ATCC 700893 / DSM 11879 / JCM 9820 / NBRC 100138 / K1).